A 361-amino-acid polypeptide reads, in one-letter code: DNA replication and repair protein RecF (361 aa).

ATP is bound at residue 30–37 (GDNAQGKT).

It belongs to the RecF family.

It localises to the cytoplasm. In terms of biological role, the RecF protein is involved in DNA metabolism; it is required for DNA replication and normal SOS inducibility. RecF binds preferentially to single-stranded, linear DNA. It also seems to bind ATP. This Clostridium perfringens (strain ATCC 13124 / DSM 756 / JCM 1290 / NCIMB 6125 / NCTC 8237 / Type A) protein is DNA replication and repair protein RecF.